The following is a 522-amino-acid chain: Protein nucleotidyltransferase YdiU (522 aa).

Gly109, Gly111, Arg112, Lys132, Asp144, Gly145, Arg195, and Arg202 together coordinate ATP. Asp271 functions as the Proton acceptor in the catalytic mechanism. Mg(2+)-binding residues include Asn272 and Asp281. Asp281 is a binding site for ATP.

Belongs to the SELO family. Mg(2+) serves as cofactor. The cofactor is Mn(2+).

It catalyses the reaction L-seryl-[protein] + ATP = 3-O-(5'-adenylyl)-L-seryl-[protein] + diphosphate. It carries out the reaction L-threonyl-[protein] + ATP = 3-O-(5'-adenylyl)-L-threonyl-[protein] + diphosphate. The catalysed reaction is L-tyrosyl-[protein] + ATP = O-(5'-adenylyl)-L-tyrosyl-[protein] + diphosphate. The enzyme catalyses L-histidyl-[protein] + UTP = N(tele)-(5'-uridylyl)-L-histidyl-[protein] + diphosphate. It catalyses the reaction L-seryl-[protein] + UTP = O-(5'-uridylyl)-L-seryl-[protein] + diphosphate. It carries out the reaction L-tyrosyl-[protein] + UTP = O-(5'-uridylyl)-L-tyrosyl-[protein] + diphosphate. In terms of biological role, nucleotidyltransferase involved in the post-translational modification of proteins. It can catalyze the addition of adenosine monophosphate (AMP) or uridine monophosphate (UMP) to a protein, resulting in modifications known as AMPylation and UMPylation. This chain is Protein nucleotidyltransferase YdiU, found in Burkholderia vietnamiensis (strain G4 / LMG 22486) (Burkholderia cepacia (strain R1808)).